Here is a 120-residue protein sequence, read N- to C-terminus: Large ribosomal subunit protein uL18 (120 aa).

Belongs to the universal ribosomal protein uL18 family. In terms of assembly, part of the 50S ribosomal subunit; part of the 5S rRNA/L5/L18/L25 subcomplex. Contacts the 5S and 23S rRNAs.

In terms of biological role, this is one of the proteins that bind and probably mediate the attachment of the 5S RNA into the large ribosomal subunit, where it forms part of the central protuberance. This Rhizobium johnstonii (strain DSM 114642 / LMG 32736 / 3841) (Rhizobium leguminosarum bv. viciae) protein is Large ribosomal subunit protein uL18.